A 148-amino-acid chain; its full sequence is Large ribosomal subunit protein bL9 (148 aa).

The protein belongs to the bacterial ribosomal protein bL9 family.

Binds to the 23S rRNA. This chain is Large ribosomal subunit protein bL9, found in Pseudomonas putida (strain GB-1).